Consider the following 511-residue polypeptide: DEP domain-containing protein 7 (511 aa).

Positions 46 to 136 constitute a DEP domain; it reads LQTQVEVKKR…SSCSLYRFTT (91 aa).

This sequence belongs to the DEPDC7 family. Expressed in liver.

In Homo sapiens (Human), this protein is DEP domain-containing protein 7 (DEPDC7).